A 223-amino-acid chain; its full sequence is Cytochrome c biogenesis ATP-binding export protein CcmA (223 aa).

Residues 1–223 (MRSLACERDE…KSDMAVGNDY (223 aa)) enclose the ABC transporter domain. ATP is bound at residue 31 to 38 (GSNGAGKT).

The protein belongs to the ABC transporter superfamily. CcmA exporter (TC 3.A.1.107) family. The complex is composed of two ATP-binding proteins (CcmA) and two transmembrane proteins (CcmB).

Its subcellular location is the cell inner membrane. It carries out the reaction heme b(in) + ATP + H2O = heme b(out) + ADP + phosphate + H(+). In terms of biological role, part of the ABC transporter complex CcmAB involved in the biogenesis of c-type cytochromes; once thought to export heme, this seems not to be the case, but its exact role is uncertain. Responsible for energy coupling to the transport system. This chain is Cytochrome c biogenesis ATP-binding export protein CcmA, found in Saccharophagus degradans (strain 2-40 / ATCC 43961 / DSM 17024).